Reading from the N-terminus, the 786-residue chain is Constitutive coactivator of peroxisome proliferator-activated receptor gamma (786 aa).

Residues 1 to 561 form a mediates transactivation of PPARG region; the sequence is MGVRGLQGFV…GTPSLEVLWL (561 aa). Disordered regions lie at residues 371-413 and 738-786; these read PNQE…KLPS and HWDS…WRRY. The span at 750–771 shows a compositional bias: polar residues; sequence QGYSSYRTDSTHGHSGQSWRNQ.

It belongs to the constitutive coactivator of PPAR-gamma family. In terms of assembly, interacts with ESR1 and RXRA. Interacts with PPARG; in a ligand-independent manner. In terms of tissue distribution, ubiquitously expressed (at protein level).

It localises to the nucleus. Functionally, functions as a transactivator of PPARG and ESR1. Functions in adipogenesis through PPARG activation. In Mus musculus (Mouse), this protein is Constitutive coactivator of peroxisome proliferator-activated receptor gamma (Fam120b).